Here is a 737-residue protein sequence, read N- to C-terminus: DNA topoisomerase 4 subunit A (737 aa).

Residues 32–496 (LPDVRDGLKP…SFEEVTLTNQ (465 aa)) form the Topo IIA-type catalytic domain. Catalysis depends on Tyr-120, which acts as the O-(5'-phospho-DNA)-tyrosine intermediate.

Belongs to the type II topoisomerase GyrA/ParC subunit family. ParC type 1 subfamily. Heterotetramer composed of ParC and ParE.

It localises to the cell membrane. It carries out the reaction ATP-dependent breakage, passage and rejoining of double-stranded DNA.. In terms of biological role, topoisomerase IV is essential for chromosome segregation. It relaxes supercoiled DNA. Performs the decatenation events required during the replication of a circular DNA molecule. This is DNA topoisomerase 4 subunit A from Rickettsia felis (strain ATCC VR-1525 / URRWXCal2) (Rickettsia azadi).